The chain runs to 145 residues: Large ribosomal subunit protein uL11 (145 aa).

It belongs to the universal ribosomal protein uL11 family. As to quaternary structure, part of the ribosomal stalk of the 50S ribosomal subunit. Interacts with L10 and the large rRNA to form the base of the stalk. L10 forms an elongated spine to which L12 dimers bind in a sequential fashion forming a multimeric L10(L12)X complex. In terms of processing, one or more lysine residues are methylated.

Its function is as follows. Forms part of the ribosomal stalk which helps the ribosome interact with GTP-bound translation factors. This chain is Large ribosomal subunit protein uL11, found in Aquifex aeolicus (strain VF5).